Here is a 357-residue protein sequence, read N- to C-terminus: DNA replication and repair protein RecF (357 aa).

30–37 (GANGSGKT) is a binding site for ATP.

It belongs to the RecF family.

Its subcellular location is the cytoplasm. The RecF protein is involved in DNA metabolism; it is required for DNA replication and normal SOS inducibility. RecF binds preferentially to single-stranded, linear DNA. It also seems to bind ATP. This Escherichia coli O139:H28 (strain E24377A / ETEC) protein is DNA replication and repair protein RecF.